The primary structure comprises 509 residues: DEAD-box ATP-dependent RNA helicase CshA (509 aa).

The short motif at 2–30 (QNFKELGISDKTVQTLEAMGFKEPTPIQK) is the Q motif element. The 171-residue stretch at 33-203 (IPYALEGDDI…QQFMKAPKII (171 aa)) folds into the Helicase ATP-binding domain. 46–53 (AQTGTGKT) serves as a coordination point for ATP. Residues 150 to 153 (DEAD) carry the DEAD box motif. The Helicase C-terminal domain occupies 214-375 (QIDEYYTIVK…LRPPHRKEVL (162 aa)). Composition is skewed to basic residues over residues 440-459 (ARKNRSSKGGSRRSNHKRGN) and 467-482 (RRSKGSKGQSSKKKNQ). Residues 440–509 (ARKNRSSKGG…KGRTFADHQK (70 aa)) are disordered. Positions 483–492 (KKFDRRDKQQ) are enriched in basic and acidic residues.

It belongs to the DEAD box helicase family. CshA subfamily. Oligomerizes, may be a member of the RNA degradosome.

Its subcellular location is the cytoplasm. The enzyme catalyses ATP + H2O = ADP + phosphate + H(+). DEAD-box RNA helicase possibly involved in RNA degradation. Unwinds dsRNA in both 5'- and 3'-directions, has RNA-dependent ATPase activity. The sequence is that of DEAD-box ATP-dependent RNA helicase CshA from Staphylococcus epidermidis (strain ATCC 12228 / FDA PCI 1200).